Here is a 366-residue protein sequence, read N- to C-terminus: Carbamoyl phosphate synthase small chain (366 aa).

The segment at 1–171 (MLEKRYLVLE…KTPYVSTGSD (171 aa)) is CPSase. The L-glutamine site is built by Ser-47, Gly-221, and Gly-223. A Glutamine amidotransferase type-1 domain is found at 173-360 (SVVLLDFGKK…ITMMKDFKEK (188 aa)). Cys-248 serves as the catalytic Nucleophile. L-glutamine is bound by residues Leu-249, Gln-252, Asn-290, Gly-292, and Tyr-293. Active-site residues include His-333 and Glu-335.

Belongs to the CarA family. Composed of two chains; the small (or glutamine) chain promotes the hydrolysis of glutamine to ammonia, which is used by the large (or ammonia) chain to synthesize carbamoyl phosphate. Tetramer of heterodimers (alpha,beta)4.

The catalysed reaction is hydrogencarbonate + L-glutamine + 2 ATP + H2O = carbamoyl phosphate + L-glutamate + 2 ADP + phosphate + 2 H(+). The enzyme catalyses L-glutamine + H2O = L-glutamate + NH4(+). Its pathway is amino-acid biosynthesis; L-arginine biosynthesis; carbamoyl phosphate from bicarbonate: step 1/1. The protein operates within pyrimidine metabolism; UMP biosynthesis via de novo pathway; (S)-dihydroorotate from bicarbonate: step 1/3. Functionally, small subunit of the glutamine-dependent carbamoyl phosphate synthetase (CPSase). CPSase catalyzes the formation of carbamoyl phosphate from the ammonia moiety of glutamine, carbonate, and phosphate donated by ATP, constituting the first step of 2 biosynthetic pathways, one leading to arginine and/or urea and the other to pyrimidine nucleotides. The small subunit (glutamine amidotransferase) binds and cleaves glutamine to supply the large subunit with the substrate ammonia. The sequence is that of Carbamoyl phosphate synthase small chain from Staphylococcus epidermidis (strain ATCC 35984 / DSM 28319 / BCRC 17069 / CCUG 31568 / BM 3577 / RP62A).